The primary structure comprises 142 residues: Hemoglobin subunit alpha-2 (142 aa).

The Globin domain maps to 2–142; the sequence is VLSPADKTNV…VSTVLTSKYR (141 aa). Residue H59 coordinates O2. H88 is a heme b binding site.

Belongs to the globin family. In terms of assembly, heterotetramer of two alpha chains and two beta chains. Red blood cells.

Involved in oxygen transport from the lung to the various peripheral tissues. The polypeptide is Hemoglobin subunit alpha-2 (Arctocephalus galapagoensis (Galapagoes fur seal)).